Reading from the N-terminus, the 395-residue chain is NAD(P)H-quinone oxidoreductase subunit H, chloroplastic (395 aa).

The protein belongs to the complex I 49 kDa subunit family. In terms of assembly, NDH is composed of at least 16 different subunits, 5 of which are encoded in the nucleus.

Its subcellular location is the plastid. It is found in the chloroplast thylakoid membrane. It carries out the reaction a plastoquinone + NADH + (n+1) H(+)(in) = a plastoquinol + NAD(+) + n H(+)(out). The enzyme catalyses a plastoquinone + NADPH + (n+1) H(+)(in) = a plastoquinol + NADP(+) + n H(+)(out). In terms of biological role, NDH shuttles electrons from NAD(P)H:plastoquinone, via FMN and iron-sulfur (Fe-S) centers, to quinones in the photosynthetic chain and possibly in a chloroplast respiratory chain. The immediate electron acceptor for the enzyme in this species is believed to be plastoquinone. Couples the redox reaction to proton translocation, and thus conserves the redox energy in a proton gradient. This is NAD(P)H-quinone oxidoreductase subunit H, chloroplastic from Chloranthus spicatus (Chulantree).